The chain runs to 231 residues: Flagellar L-ring protein (231 aa).

Residues 1–18 (MNRLLSLFALGGAVLLAG) form the signal peptide. Cys19 is lipidated: N-palmitoyl cysteine. Cys19 carries the S-diacylglycerol cysteine lipid modification.

The protein belongs to the FlgH family. As to quaternary structure, the basal body constitutes a major portion of the flagellar organelle and consists of four rings (L,P,S, and M) mounted on a central rod.

The protein localises to the cell outer membrane. The protein resides in the bacterial flagellum basal body. Its function is as follows. Assembles around the rod to form the L-ring and probably protects the motor/basal body from shearing forces during rotation. This Pseudomonas putida (strain W619) protein is Flagellar L-ring protein.